Reading from the N-terminus, the 312-residue chain is Ribosomal protein uL3 glutamine methyltransferase (312 aa).

It belongs to the protein N5-glutamine methyltransferase family. PrmB subfamily.

The enzyme catalyses L-glutaminyl-[ribosomal protein uL3] + S-adenosyl-L-methionine = N(5)-methyl-L-glutaminyl-[ribosomal protein uL3] + S-adenosyl-L-homocysteine + H(+). Methylates large ribosomal subunit protein uL3 on a specific glutamine residue. This Xylella fastidiosa (strain 9a5c) protein is Ribosomal protein uL3 glutamine methyltransferase.